A 102-amino-acid chain; its full sequence is Caroteno-chlorophyll a-c-binding protein (102 aa).

Chlorophyll a-binding residues include E36 and H39. A helical membrane pass occupies residues 78-98 (VLGLIKIVPAGLWGIMIFYAA).

Belongs to the light-harvesting chlorophyll a/b-binding (LHC) protein family. As to quaternary structure, the LHC complex consists of chlorophyll a-b binding proteins. Binds at least 14 chlorophylls (8 Chl-a and 6 Chl-b) and carotenoids such as lutein and neoxanthin. is required as a cofactor. In terms of processing, photoregulated by reversible phosphorylation of its threonine residues.

It is found in the plastid. The protein resides in the chloroplast thylakoid membrane. Its function is as follows. The light-harvesting complex (LHC) functions as a light receptor, it captures and delivers excitation energy to photosystems with which it is closely associated. This is Caroteno-chlorophyll a-c-binding protein from Amphidinium carterae (Dinoflagellate).